A 126-amino-acid chain; its full sequence is Topoisomerase I damage affected protein 8 (126 aa).

In terms of domain architecture, PA14 spans 1–110 (MTGYFLPPQT…VTTVSDDFAG (110 aa)).

This sequence belongs to the flocculin family.

This Saccharomyces cerevisiae (strain ATCC 204508 / S288c) (Baker's yeast) protein is Topoisomerase I damage affected protein 8 (TDA8).